The following is a 325-amino-acid chain: Tartrate-resistant acid phosphatase type 5 (325 aa).

The N-terminal stretch at 1-21 (MDTWTLLLVLHTSLLLPWAEG) is a signal peptide. N-linked (GlcNAc...) asparagine glycosylation is found at asparagine 116 and asparagine 147.

In terms of assembly, exists either as monomer or, after proteolytic processing, as a dimer of two chains linked by disulfide bond(s). Fe cation is required as a cofactor.

It is found in the lysosome. It carries out the reaction a phosphate monoester + H2O = an alcohol + phosphate. This chain is Tartrate-resistant acid phosphatase type 5 (ACP5), found in Oryctolagus cuniculus (Rabbit).